The sequence spans 156 residues: Small ribosomal subunit protein uS7 (156 aa).

The protein belongs to the universal ribosomal protein uS7 family. As to quaternary structure, part of the 30S ribosomal subunit. Contacts proteins S9 and S11.

In terms of biological role, one of the primary rRNA binding proteins, it binds directly to 16S rRNA where it nucleates assembly of the head domain of the 30S subunit. Is located at the subunit interface close to the decoding center, probably blocks exit of the E-site tRNA. This is Small ribosomal subunit protein uS7 from Pelagibacter ubique (strain HTCC1062).